The primary structure comprises 106 residues: PTS system N,N'-diacetylchitobiose-specific EIIB component (106 aa).

Residues 3 to 106 (KKHIYLFCSA…VAAIKKAAAN (104 aa)) enclose the PTS EIIB type-3 domain. Cysteine 10 acts as the Phosphocysteine intermediate in catalysis. Cysteine 10 is modified (phosphocysteine; by EIIA).

In terms of assembly, forms a complex with ChbA (EIIA). ChbB is a monomer in both its unphosphorylated and phosphorylated forms.

It is found in the cytoplasm. The enzyme catalyses N,N'-diacetylchitobiose(out) + N(pros)-phospho-L-histidyl-[protein] = diacetylchitobiose-6'-phosphate(in) + L-histidyl-[protein]. Functionally, the phosphoenolpyruvate-dependent sugar phosphotransferase system (sugar PTS), a major carbohydrate active transport system, catalyzes the phosphorylation of incoming sugar substrates concomitantly with their translocation across the cell membrane. The enzyme II ChbABC PTS system is involved in the transport of the chitin disaccharide N,N'-diacetylchitobiose (GlcNAc2). This chain is PTS system N,N'-diacetylchitobiose-specific EIIB component (chbB), found in Escherichia coli O157:H7.